A 100-amino-acid polypeptide reads, in one-letter code: Omega-hexatoxin-Asp2a (100 aa).

A signal peptide spans methionine 1–glycine 23. A propeptide spanning residues methionine 24 to glutamate 55 is cleaved from the precursor. 3 cysteine pairs are disulfide-bonded: cysteine 60–cysteine 73, cysteine 66–cysteine 79, and cysteine 72–cysteine 84.

Belongs to the neurotoxin 15 family. 02 (omega-actx) subfamily. As to expression, expressed by the venom gland.

The protein localises to the secreted. In terms of biological role, potent inhibitor of insect, but not mammalian, voltage-gated calcium channels (Cav). In Atrax sp. (strain Illawarra) (Funnel-web spider), this protein is Omega-hexatoxin-Asp2a.